A 183-amino-acid chain; its full sequence is Intraflagellar transport protein 27 homolog (183 aa).

Residues 12 to 19 (GAPTVGKT), 63 to 67 (DVSGQ), and 120 to 123 (NKSD) each bind GTP.

The protein belongs to the small GTPase superfamily. Rab family. In terms of assembly, component of the IFT complex B.

It localises to the cell projection. It is found in the cilium. Its subcellular location is the flagellum. In terms of biological role, small GTPase-like component of the intraflagellar transport (IFT) complex B required for both anterograde and retrograde intraflagellar transport. May be involved in cargo loading of the retrograde transport. This Trypanosoma brucei brucei (strain 927/4 GUTat10.1) protein is Intraflagellar transport protein 27 homolog.